The primary structure comprises 898 residues: MEGIHKLIFLALIWIFLITNIVDAQDQQGFISLDCGMPRNESSYTDESTGLNFSSDADFISSGKSGTIKTEDSDSGVKYIKPYKQLRYFPEGARNCYNLTVMQGTHYLIRAVFVYGNYDLKQRPKFDLYLGPNFWTTINLQDPSGGFYYRIWLQDGTVEEVIHMPKSNNLDICLVKTGTTTPFISSLELRPLRDDTYTTTTGSLKLISRWYFRKPFPTLESIIRHPDDVHDRLWDVYHADEEWTDINTTTPVNTTVNAFDLPQAIISKASIPQVASDTWSTTWSIQNPDDDVHVYLHFAEIQALKPSDTREFSILWNKNTIIRDYYSPLEFMADTVPIRTSSKCGDDGFCSLDLTRTKSSTLPPYCNAMEVFGLLQLLQTETDENDVTTLKNIQATYRIQKTNWQGDPCVPIQFIWTGLNCSNMFPSIPPRITSIDFSNFGLNGTITSDIQYLNQLQKLDLSNNNLTGKVPEFLAKMKLLTFINLSGNNLSGSIPQSLLNMEKNGLITLLYNGNNLCLDPSCESETGPGNNKKKLLVPILASAASVGIIIAVLLLVNILLLRKKKPSKASRSSMVANKRSYTYEEVAVITNNFERPLGEGGFGVVYHGNVNDNEQVAVKVLSESSAQGYKQFKAEVDLLLRVHHINLVTLVGYCDEGQHLVLIYEYMSNGNLKQHLSGENSRSPLSWENRLRIAAETAQGLEYLHIGCKPPMIHRDIKSMNILLDNNFQAKLGDFGLSRSFPVGSETHVSTNVAGSPGYLDPEYYRTNWLTEKSDVFSFGVVLLEIITSQPVIDQTREKSHIGEWVGFKLTNGDIKNIVDPSMNGDYDSSSLWKALELAMSCVSPSSSGRPNMSQVANELQECLLTENSRKGGRHDVDSKSSLEQSTSFGPEHIPDAR.

The first 24 residues, 1-24 (MEGIHKLIFLALIWIFLITNIVDA), serve as a signal peptide directing secretion. The Extracellular segment spans residues 25–535 (QDQQGFISLD…TGPGNNKKKL (511 aa)). Residues N40, N52, N98, N247, N253, N420, N443, N465, N484, and N489 are each glycosylated (N-linked (GlcNAc...) asparagine). 3 LRR repeats span residues 455–477 (QLQK…LAKM), 479–501 (LLTF…LLNM), and 505–526 (GLIT…ESET). Residues 536-556 (LVPILASAASVGIIIAVLLLV) traverse the membrane as a helical segment. Residues 557 to 898 (NILLLRKKKP…FGPEHIPDAR (342 aa)) are Cytoplasmic-facing. Phosphothreonine is present on T582. The Protein kinase domain occupies 591-864 (NNFERPLGEG…QVANELQECL (274 aa)). ATP-binding positions include 597 to 605 (LGEGGFGVV) and K619. The residue at position 664 (Y664) is a Phosphotyrosine. D716 serves as the catalytic Proton acceptor. S750 carries the phosphoserine modification. T751 carries the post-translational modification Phosphothreonine. A Phosphotyrosine modification is found at Y764. The disordered stretch occupies residues 864 to 898 (LLTENSRKGGRHDVDSKSSLEQSTSFGPEHIPDAR). A compositionally biased stretch (basic and acidic residues) spans 868–881 (NSRKGGRHDVDSKS).

It belongs to the protein kinase superfamily. Ser/Thr protein kinase family.

The protein resides in the membrane. It catalyses the reaction L-seryl-[protein] + ATP = O-phospho-L-seryl-[protein] + ADP + H(+). The enzyme catalyses L-threonyl-[protein] + ATP = O-phospho-L-threonyl-[protein] + ADP + H(+). In Arabidopsis thaliana (Mouse-ear cress), this protein is Probable LRR receptor-like serine/threonine-protein kinase At4g20450.